The sequence spans 334 residues: Dual specificity mitogen-activated protein kinase kinase 6 (334 aa).

The span at 1-11 (MSQSKGKKRNP) shows a compositional bias: basic residues. The tract at residues 1 to 34 (MSQSKGKKRNPGLKIPKEAFEQPQTSSTPPRDLD) is disordered. Residues 4 to 19 (SKGKKRNPGLKIPKEA) form a d domain region. Residues 53-314 (LEPIMELGRG…YPELMQHPFF (262 aa)) enclose the Protein kinase domain. ATP contacts are provided by residues 59-67 (LGRGAYGVV) and K82. Catalysis depends on D179, which acts as the Proton acceptor. (Microbial infection) O-acetylserine; by Yersinia YopJ; alternate is present on S207. Phosphoserine; by MAP3K; alternate is present on S207. T211 carries the (Microbial infection) O-acetylthreonine; by Yersinia YopJ; alternate modification. A Phosphothreonine; by MAP3K; alternate modification is found at T211. The tract at residues 311–334 (HPFFTLHESKGTDVASFVKLILGD) is DVD domain.

This sequence belongs to the protein kinase superfamily. STE Ser/Thr protein kinase family. MAP kinase kinase subfamily. As to quaternary structure, dimer. Interacts (via its D domain) with its substrates MAPK11, MAPK12, MAPK13 and MAPK14. Interacts (via its DVD domain) with MAP3Ks activators like MAP3K5/ASK1, MAP3K1/MEKK1, MAP3K2/MEKK2, MAP3K3/MEKK3, MAP3K4/MEKK4, MAP3K7/TAK1, MAP3K11/MLK3 and MAP3K17/TAOK2. Interacts with DCTN1. Interacts with EIF2AK2/PKR. In terms of assembly, (Microbial infection) Interacts with Yersinia YopJ. Post-translationally, weakly autophosphorylated. Phosphorylated at Ser-207 and Thr-211 by the majority of M3Ks, such as MAP3K5/ASK1, MAP3K1/MEKK1, MAP3K2/MEKK2, MAP3K3/MEKK3, MAP3K4/MEKK4, MAP3K7/TAK1, MAP3K11/MLK3 and MAP3K17/TAOK2. In terms of processing, in response to genotoxic stress, MAP3K-phosphorylated MAP2K6 is ubiquitinated and degraded by the SCF(FBXO31) complex. (Microbial infection) Acetylation of Ser-207 and Thr-211 by Yersinia YopJ prevents phosphorylation and activation, thus blocking the MAPK signaling pathway. Isoform 2 is only expressed in skeletal muscle. Isoform 1 is expressed in skeletal muscle, heart, and in lesser extent in liver or pancreas.

It is found in the nucleus. It localises to the cytoplasm. The protein resides in the cytoskeleton. The catalysed reaction is L-seryl-[protein] + ATP = O-phospho-L-seryl-[protein] + ADP + H(+). The enzyme catalyses L-threonyl-[protein] + ATP = O-phospho-L-threonyl-[protein] + ADP + H(+). It carries out the reaction L-tyrosyl-[protein] + ATP = O-phospho-L-tyrosyl-[protein] + ADP + H(+). With respect to regulation, activated by dual phosphorylation on Ser-207 and Thr-211 in response to a variety of cellular stresses, including UV radiation, osmotic shock, hypoxia, inflammatory cytokines, interferon gamma (IFNG), and less often by growth factors. MAP2K6/MKK6 is activated by the majority of M3Ks, such as MAP3K5/ASK1, MAP3K1/MEKK1, MAP3K2/MEKK2, MAP3K3/MEKK3, MAP3K4/MEKK4, MAP3K7/TAK1, MAP3K11/MLK3 and MAP3K17/TAOK2. Functionally, dual specificity protein kinase which acts as an essential component of the MAP kinase signal transduction pathway. With MAP3K3/MKK3, catalyzes the concomitant phosphorylation of a threonine and a tyrosine residue in the MAP kinases p38 MAPK11, MAPK12, MAPK13 and MAPK14 and plays an important role in the regulation of cellular responses to cytokines and all kinds of stresses. Especially, MAP2K3/MKK3 and MAP2K6/MKK6 are both essential for the activation of MAPK11 and MAPK13 induced by environmental stress, whereas MAP2K6/MKK6 is the major MAPK11 activator in response to TNF. MAP2K6/MKK6 also phosphorylates and activates PAK6. The p38 MAP kinase signal transduction pathway leads to direct activation of transcription factors. Nuclear targets of p38 MAP kinase include the transcription factors ATF2 and ELK1. Within the p38 MAPK signal transduction pathway, MAP3K6/MKK6 mediates phosphorylation of STAT4 through MAPK14 activation, and is therefore required for STAT4 activation and STAT4-regulated gene expression in response to IL-12 stimulation. The pathway is also crucial for IL-6-induced SOCS3 expression and down-regulation of IL-6-mediated gene induction; and for IFNG-dependent gene transcription. Has a role in osteoclast differentiation through NF-kappa-B transactivation by TNFSF11, and in endochondral ossification and since SOX9 is another likely downstream target of the p38 MAPK pathway. MAP2K6/MKK6 mediates apoptotic cell death in thymocytes. Acts also as a regulator for melanocytes dendricity, through the modulation of Rho family GTPases. The chain is Dual specificity mitogen-activated protein kinase kinase 6 (MAP2K6) from Homo sapiens (Human).